Reading from the N-terminus, the 362-residue chain is Phosphoserine aminotransferase (362 aa).

Arg-43 contributes to the L-glutamate binding site. Residues 77–78 (AR), Trp-103, Thr-153, Asp-173, and Gln-196 each bind pyridoxal 5'-phosphate. An N6-(pyridoxal phosphate)lysine modification is found at Lys-197.

The protein belongs to the class-V pyridoxal-phosphate-dependent aminotransferase family. SerC subfamily. Homodimer. The cofactor is pyridoxal 5'-phosphate.

The protein resides in the cytoplasm. It carries out the reaction O-phospho-L-serine + 2-oxoglutarate = 3-phosphooxypyruvate + L-glutamate. It catalyses the reaction 4-(phosphooxy)-L-threonine + 2-oxoglutarate = (R)-3-hydroxy-2-oxo-4-phosphooxybutanoate + L-glutamate. It functions in the pathway amino-acid biosynthesis; L-serine biosynthesis; L-serine from 3-phospho-D-glycerate: step 2/3. The protein operates within cofactor biosynthesis; pyridoxine 5'-phosphate biosynthesis; pyridoxine 5'-phosphate from D-erythrose 4-phosphate: step 3/5. Its function is as follows. Catalyzes the reversible conversion of 3-phosphohydroxypyruvate to phosphoserine and of 3-hydroxy-2-oxo-4-phosphonooxybutanoate to phosphohydroxythreonine. The sequence is that of Phosphoserine aminotransferase from Legionella pneumophila (strain Lens).